We begin with the raw amino-acid sequence, 281 residues long: Tryptophan synthase alpha chain (281 aa).

Active-site proton acceptor residues include E49 and D60.

Belongs to the TrpA family. Tetramer of two alpha and two beta chains.

The enzyme catalyses (1S,2R)-1-C-(indol-3-yl)glycerol 3-phosphate + L-serine = D-glyceraldehyde 3-phosphate + L-tryptophan + H2O. The protein operates within amino-acid biosynthesis; L-tryptophan biosynthesis; L-tryptophan from chorismate: step 5/5. The alpha subunit is responsible for the aldol cleavage of indoleglycerol phosphate to indole and glyceraldehyde 3-phosphate. The protein is Tryptophan synthase alpha chain of Methanocaldococcus jannaschii (strain ATCC 43067 / DSM 2661 / JAL-1 / JCM 10045 / NBRC 100440) (Methanococcus jannaschii).